The sequence spans 198 residues: Outer-membrane lipoprotein carrier protein (198 aa).

The first 17 residues, 1–17, serve as a signal peptide directing secretion; that stretch reads MKKILLSLCFLSSVAFA.

It belongs to the LolA family. In terms of assembly, monomer.

It is found in the periplasm. Its function is as follows. Participates in the translocation of lipoproteins from the inner membrane to the outer membrane. Only forms a complex with a lipoprotein if the residue after the N-terminal Cys is not an aspartate (The Asp acts as a targeting signal to indicate that the lipoprotein should stay in the inner membrane). The protein is Outer-membrane lipoprotein carrier protein of Aliivibrio salmonicida (strain LFI1238) (Vibrio salmonicida (strain LFI1238)).